The sequence spans 1887 residues: Protein TIC 214 (1887 aa).

Helical transmembrane passes span 18 to 38 (IINSVVVVGLYYGFLTTFSIG), 64 to 84 (FITGQLMMFISIYYAPLHLAL), 87 to 107 (PHTITVLALPYLLFHFFWNNH), 124 to 144 (LSIQCVFLNNLIFQLFNHFIL), 172 to 192 (VGWLIGHILFMKWLGLVLVWI), and 221 to 241 (IFSILLFITCVYYLGRIPSPI). 3 disordered regions span residues 248-300 (EASK…EGWD), 786-805 (EEQTKREEKKEKDKKEDNKR), and 1569-1603 (LPSNKKIKNRSQETKEPPSQRERGSDIENKGNLSP). Residues 256–268 (VESEEERDVEIET) are compositionally biased toward acidic residues. Residues 775-816 (KEREFKILESREEQTKREEKKEKDKKEDNKRKEQARIAIEEA) adopt a coiled-coil conformation. The segment covering 1578-1597 (RSQETKEPPSQRERGSDIEN) has biased composition (basic and acidic residues).

This sequence belongs to the TIC214 family. Part of the Tic complex.

The protein resides in the plastid. It is found in the chloroplast inner membrane. In terms of biological role, involved in protein precursor import into chloroplasts. May be part of an intermediate translocation complex acting as a protein-conducting channel at the inner envelope. The protein is Protein TIC 214 of Solanum bulbocastanum (Wild potato).